The chain runs to 295 residues: Glutamyl-Q tRNA(Asp) synthetase (295 aa).

Residues 5 to 9 and glutamate 41 contribute to the L-glutamate site; that span reads RFAPS. Positions 8–18 match the 'HIGH' region motif; it reads PSPTGLLHIGS. Cysteine 97, cysteine 99, tyrosine 117, and cysteine 121 together coordinate Zn(2+). The L-glutamate site is built by tyrosine 178 and arginine 196. Positions 234 to 238 match the 'KMSKS' region motif; the sequence is KWSKQ. Lysine 237 provides a ligand contact to ATP.

This sequence belongs to the class-I aminoacyl-tRNA synthetase family. GluQ subfamily. Requires Zn(2+) as cofactor.

Catalyzes the tRNA-independent activation of glutamate in presence of ATP and the subsequent transfer of glutamate onto a tRNA(Asp). Glutamate is transferred on the 2-amino-5-(4,5-dihydroxy-2-cyclopenten-1-yl) moiety of the queuosine in the wobble position of the QUC anticodon. This is Glutamyl-Q tRNA(Asp) synthetase from Neisseria meningitidis serogroup C / serotype 2a (strain ATCC 700532 / DSM 15464 / FAM18).